A 39-amino-acid chain; its full sequence is Fructose 5-dehydrogenase [NADP(+)] (39 aa).

It carries out the reaction D-fructose + NADP(+) = 5-dehydro-D-fructose + NADPH + H(+). This is Fructose 5-dehydrogenase [NADP(+)] from Erwinia citreus.